We begin with the raw amino-acid sequence, 210 residues long: Urease accessory protein UreG (210 aa).

A GTP-binding site is contributed by 14–21 (GPVGSGKT).

Belongs to the SIMIBI class G3E GTPase family. UreG subfamily. Homodimer. UreD, UreF and UreG form a complex that acts as a GTP-hydrolysis-dependent molecular chaperone, activating the urease apoprotein by helping to assemble the nickel containing metallocenter of UreC. The UreE protein probably delivers the nickel.

It localises to the cytoplasm. Functionally, facilitates the functional incorporation of the urease nickel metallocenter. This process requires GTP hydrolysis, probably effectuated by UreG. This chain is Urease accessory protein UreG, found in Rhodopseudomonas palustris (strain BisA53).